Here is a 120-residue protein sequence, read N- to C-terminus: Large ribosomal subunit protein uL18 (120 aa).

Basic and acidic residues predominate over residues 1 to 10; that stretch reads MKRTRTESVQ. Positions 1 to 24 are disordered; it reads MKRTRTESVQRRHSRIRRKVEGTP.

The protein belongs to the universal ribosomal protein uL18 family. In terms of assembly, part of the 50S ribosomal subunit; part of the 5S rRNA/L5/L18/L25 subcomplex. Contacts the 5S and 23S rRNAs.

Functionally, this is one of the proteins that bind and probably mediate the attachment of the 5S RNA into the large ribosomal subunit, where it forms part of the central protuberance. This Gloeothece citriformis (strain PCC 7424) (Cyanothece sp. (strain PCC 7424)) protein is Large ribosomal subunit protein uL18.